We begin with the raw amino-acid sequence, 658 residues long: MSDVRVIIQRDSEREERVVTTGTTAADLFPGERTVVAARVGGELKDLAYEVKDGEEVEPVQISSEDGLNILRHSTAHVMAQAVQELFPEAKLGIGPPVKDGFYYDFDVAKPFTPEDLKAIEKKMQEIQKRGQRFSRRVVTDEAAREELADEPYKLELIGIKGSASNDDGANVEVGSGELTIYDNLDAKTGDLCWKDLCRGPHLPTTRNIPAFKLMRNAAAYWRGSEKNPMLQRIYGTAWPSKDELKAHLDFLAEAEKRDHRKLGNELDLFSIPDQIGSGLAVFHPKGGIVRRVMEDYSRRRHEEEGYEFVYTPHATKGKLFETSGHLDWYADGMYPPMQLDEGVDYYLKPMNCPMHNLIFDARGRSYRELPLRLFEFGTVYRYEKSGVVHGLTRARGFTQDDAHIYCTREKMADELDKTLTFVLNLLRDYGLTDFYLELSTKDPEKFVGSDEVWEEATETLRQVAEKQGLPLVPDPGGAAFYGPKISVQAKDAIGRTWQMSTVQLDFNLPERFDLEYTGPDGSKQRPVMIHRALFGSIERFFAVLLEHYAGAFPAWLAPVQAVGIPIGDAHVEYLQKFAAEAKKKGLRVEVDSSSDRMQKKIRNAQKQKVPFMVIAGDEDMTAGAVSFRYRDGSQENGIPLDEAIAKIAKVVEERTQV.

The 61-residue stretch at Met-1 to Gln-61 folds into the TGS domain. Residues Asp-259 to Pro-554 are catalytic. Positions 353, 404, and 531 each coordinate Zn(2+).

Belongs to the class-II aminoacyl-tRNA synthetase family. As to quaternary structure, homodimer. Zn(2+) is required as a cofactor.

It is found in the cytoplasm. It carries out the reaction tRNA(Thr) + L-threonine + ATP = L-threonyl-tRNA(Thr) + AMP + diphosphate + H(+). Catalyzes the attachment of threonine to tRNA(Thr) in a two-step reaction: L-threonine is first activated by ATP to form Thr-AMP and then transferred to the acceptor end of tRNA(Thr). Also edits incorrectly charged L-seryl-tRNA(Thr). This Streptomyces avermitilis (strain ATCC 31267 / DSM 46492 / JCM 5070 / NBRC 14893 / NCIMB 12804 / NRRL 8165 / MA-4680) protein is Threonine--tRNA ligase.